The chain runs to 244 residues: N-(5'-phosphoribosyl)anthranilate isomerase 3, chloroplastic (244 aa).

A chloroplast-targeting transit peptide spans 1–32 (MSTGISSDLHLHPRALNFSKTSKSGLSNRKVS).

This sequence belongs to the TrpF family.

The protein resides in the plastid. Its subcellular location is the chloroplast. It carries out the reaction N-(5-phospho-beta-D-ribosyl)anthranilate = 1-(2-carboxyphenylamino)-1-deoxy-D-ribulose 5-phosphate. It participates in amino-acid biosynthesis; L-tryptophan biosynthesis; L-tryptophan from chorismate: step 3/5. In Arabidopsis thaliana (Mouse-ear cress), this protein is N-(5'-phosphoribosyl)anthranilate isomerase 3, chloroplastic (PAI3).